Here is a 388-residue protein sequence, read N- to C-terminus: Lipoyl synthase, mitochondrial (388 aa).

Residues 1 to 18 (MRLTTVQRRFLVSTKAKV) constitute a mitochondrion transit peptide. A compositionally biased stretch (low complexity) spans 22-39 (SISSTANTGSASAGAPNG). The disordered stretch occupies residues 22–43 (SISSTANTGSASAGAPNGQTRR). The [4Fe-4S] cluster site is built by Cys120, Cys125, Cys131, Cys151, Cys155, Cys158, and Ser366. The Radical SAM core domain maps to 134 to 355 (GKDKSKATAT…KDKAKEMGFL (222 aa)).

It belongs to the radical SAM superfamily. Lipoyl synthase family. It depends on [4Fe-4S] cluster as a cofactor.

The protein localises to the mitochondrion. The catalysed reaction is [[Fe-S] cluster scaffold protein carrying a second [4Fe-4S](2+) cluster] + N(6)-octanoyl-L-lysyl-[protein] + 2 oxidized [2Fe-2S]-[ferredoxin] + 2 S-adenosyl-L-methionine + 4 H(+) = [[Fe-S] cluster scaffold protein] + N(6)-[(R)-dihydrolipoyl]-L-lysyl-[protein] + 4 Fe(3+) + 2 hydrogen sulfide + 2 5'-deoxyadenosine + 2 L-methionine + 2 reduced [2Fe-2S]-[ferredoxin]. It functions in the pathway protein modification; protein lipoylation via endogenous pathway; protein N(6)-(lipoyl)lysine from octanoyl-[acyl-carrier-protein]: step 2/2. Functionally, catalyzes the radical-mediated insertion of two sulfur atoms into the C-6 and C-8 positions of the octanoyl moiety bound to the lipoyl domains of lipoate-dependent enzymes, thereby converting the octanoylated domains into lipoylated derivatives. This chain is Lipoyl synthase, mitochondrial, found in Candida glabrata (strain ATCC 2001 / BCRC 20586 / JCM 3761 / NBRC 0622 / NRRL Y-65 / CBS 138) (Yeast).